Reading from the N-terminus, the 362-residue chain is sn-glycerol-3-phosphate import ATP-binding protein UgpC (362 aa).

An ABC transporter domain is found at 4 to 235; that stretch reads LSFRNVKKTY…PASTFVAGFI (232 aa). An ATP-binding site is contributed by 37–44; sequence GPSGCGKS.

This sequence belongs to the ABC transporter superfamily. sn-glycerol-3-phosphate importer (TC 3.A.1.1.3) family. The complex is composed of two ATP-binding proteins (UgpC), two transmembrane proteins (UgpA and UgpE) and a solute-binding protein (UgpB).

The protein localises to the cell inner membrane. The enzyme catalyses sn-glycerol 3-phosphate(out) + ATP + H2O = sn-glycerol 3-phosphate(in) + ADP + phosphate + H(+). In terms of biological role, part of the ABC transporter complex UgpBAEC involved in sn-glycerol-3-phosphate (G3P) import. Responsible for energy coupling to the transport system. The chain is sn-glycerol-3-phosphate import ATP-binding protein UgpC from Bordetella bronchiseptica (strain ATCC BAA-588 / NCTC 13252 / RB50) (Alcaligenes bronchisepticus).